Here is a 294-residue protein sequence, read N- to C-terminus: uncharacterized protein (294 aa).

3 disordered regions span residues 1–30, 51–86, and 250–294; these read MKRQ…EVSH, ALSD…KKRP, and DELN…STST. Polar residues-rich tracts occupy residues 7-26, 66-81, and 255-277; these read QDSM…TPTK, PYSS…NSST, and PMNN…NLPT.

The protein resides in the nucleus. This is an uncharacterized protein from Schizosaccharomyces pombe (strain 972 / ATCC 24843) (Fission yeast).